Reading from the N-terminus, the 247-residue chain is Histone acetyltransferase MCC1 (247 aa).

Residues 25–198 (IHYRPINPND…DAFLFVYFIN (174 aa)) form the N-acetyltransferase domain.

It belongs to the acetyltransferase family.

The catalysed reaction is L-lysyl-[protein] + acetyl-CoA = N(6)-acetyl-L-lysyl-[protein] + CoA + H(+). Functionally, histone acetyltransferase that probably regulates acetylation status of histone H3 during meiosis. Histone acetylation may influence recombination and chromosome segregation. This is Histone acetyltransferase MCC1 (MCC1) from Arabidopsis thaliana (Mouse-ear cress).